We begin with the raw amino-acid sequence, 357 residues long: MQLSDFSFDLPKSLISFHPYFIRSTCRLMVMYGHTGMIFHKRFFNIIDEINSGDLIILNNTQVIPARFFGKKESGGKVEVLVEKILGINNILASIKNSKNINIGSKIFFGYKDKIKGSVVDCKNSFFEIFFHDNIDSAIDIINNIGEIPLPPYIKRFRNKLDVDLYQTVYKKKTGSIAAPTAGLHFDLPLLEALHNKGVDIDYITLHIGSGTFQPIRRVQIEEHIMHSESVEVSSSVIQKIKSCKKKGGRIIAVGTSTLRALESAYHSSEWSDSQDFISDTNIFIYPGYKHNIVDALITNFHFPESTLIMLVCSFLGYKNTMNAYNTAIVNKYSFFSYGDAMYITHNKLAPYENFII.

It belongs to the QueA family. In terms of assembly, monomer.

It localises to the cytoplasm. It catalyses the reaction 7-aminomethyl-7-carbaguanosine(34) in tRNA + S-adenosyl-L-methionine = epoxyqueuosine(34) in tRNA + adenine + L-methionine + 2 H(+). The protein operates within tRNA modification; tRNA-queuosine biosynthesis. Its function is as follows. Transfers and isomerizes the ribose moiety from AdoMet to the 7-aminomethyl group of 7-deazaguanine (preQ1-tRNA) to give epoxyqueuosine (oQ-tRNA). The protein is S-adenosylmethionine:tRNA ribosyltransferase-isomerase of Buchnera aphidicola subsp. Acyrthosiphon pisum (strain APS) (Acyrthosiphon pisum symbiotic bacterium).